Consider the following 427-residue polypeptide: Gamma-glutamyl phosphate reductase (427 aa).

It belongs to the gamma-glutamyl phosphate reductase family.

It is found in the cytoplasm. The enzyme catalyses L-glutamate 5-semialdehyde + phosphate + NADP(+) = L-glutamyl 5-phosphate + NADPH + H(+). It participates in amino-acid biosynthesis; L-proline biosynthesis; L-glutamate 5-semialdehyde from L-glutamate: step 2/2. Its function is as follows. Catalyzes the NADPH-dependent reduction of L-glutamate 5-phosphate into L-glutamate 5-semialdehyde and phosphate. The product spontaneously undergoes cyclization to form 1-pyrroline-5-carboxylate. The protein is Gamma-glutamyl phosphate reductase of Streptomyces griseus subsp. griseus (strain JCM 4626 / CBS 651.72 / NBRC 13350 / KCC S-0626 / ISP 5235).